Reading from the N-terminus, the 147-residue chain is Hemoglobin subunit epsilon (147 aa).

A Globin domain is found at His-3 to His-147. Residues Ser-14 and Ser-51 each carry the phosphoserine modification. Residues His-64 and His-93 each coordinate heme b.

It belongs to the globin family. In terms of assembly, heterotetramer of two alpha chains and two epsilon chains in early embryonic hemoglobin Gower-2; two zeta chains and two epsilon chains in early embryonic hemoglobin Gower-1. In terms of tissue distribution, red blood cells.

Its function is as follows. The epsilon chain is a beta-type chain of early mammalian embryonic hemoglobin. In Alouatta belzebul (Red-handed howler monkey), this protein is Hemoglobin subunit epsilon (HBE1).